A 1037-amino-acid chain; its full sequence is Probable serine/threonine-protein kinase KCC4 (1037 aa).

The 265-residue stretch at 21–285 folds into the Protein kinase domain; sequence WKLGETLGFG…IRDILSHPLL (265 aa). Residues 27 to 35 and lysine 50 contribute to the ATP site; that span reads LGFGSTGKV. The active-site Proton acceptor is aspartate 152. Residues 372 to 387 are compositionally biased toward basic residues; sequence NKKNRNKIKKTKKNKR. A disordered region spans residues 372–494; that stretch reads NKKNRNKIKK…MPNTKRSSLT (123 aa). Residues 388-404 show a composition bias toward low complexity; that stretch reads SSTLSSSSSLLLNNRSI. A Phosphoserine modification is found at serine 396. Basic residues predominate over residues 408-427; it reads PRRRTSKRHSREFSSSRKRS. Residues 453–465 are compositionally biased toward polar residues; it reads NVASANTQATPSG. Positions 469-480 are enriched in basic residues; that stretch reads PHKRNSKKRSSK. Over residues 481–494 the composition is skewed to low complexity; it reads RLSYMPNTKRSSLT. Phosphoserine is present on residues serine 675, serine 707, serine 777, serine 822, serine 825, and serine 871. Disordered regions lie at residues 746 to 804, 810 to 829, and 861 to 918; these read LIKE…DFPQ, QEYDMKDKNPNQSPISKSAE, and TLPS…TVKK. Residues 861–873 are compositionally biased toward polar residues; that stretch reads TLPSLTSNNSSVG. Residues 879-888 show a composition bias toward basic and acidic residues; sequence GAEKGTESEK.

The protein belongs to the protein kinase superfamily. CAMK Ser/Thr protein kinase family. NIM1 subfamily. Interacts with septin proteins, primarily with CDC11. Interacts with SWE1 and NAP1.

It localises to the bud neck. It carries out the reaction L-seryl-[protein] + ATP = O-phospho-L-seryl-[protein] + ADP + H(+). It catalyses the reaction L-threonyl-[protein] + ATP = O-phospho-L-threonyl-[protein] + ADP + H(+). Functionally, involved in regulation of bud growth during cell cycle and in septin organization. Plays a role in cell wall synthesis. The protein is Probable serine/threonine-protein kinase KCC4 (KCC4) of Saccharomyces cerevisiae (strain ATCC 204508 / S288c) (Baker's yeast).